A 428-amino-acid polypeptide reads, in one-letter code: Serine hydroxymethyltransferase (428 aa).

(6S)-5,6,7,8-tetrahydrofolate is bound by residues L127 and 131 to 133; that span reads GHL. At K236 the chain carries N6-(pyridoxal phosphate)lysine.

It belongs to the SHMT family. Homodimer. The cofactor is pyridoxal 5'-phosphate.

It is found in the cytoplasm. It catalyses the reaction (6R)-5,10-methylene-5,6,7,8-tetrahydrofolate + glycine + H2O = (6S)-5,6,7,8-tetrahydrofolate + L-serine. The protein operates within one-carbon metabolism; tetrahydrofolate interconversion. It functions in the pathway amino-acid biosynthesis; glycine biosynthesis; glycine from L-serine: step 1/1. Its function is as follows. Catalyzes the reversible interconversion of serine and glycine with tetrahydrofolate (THF) serving as the one-carbon carrier. This reaction serves as the major source of one-carbon groups required for the biosynthesis of purines, thymidylate, methionine, and other important biomolecules. Also exhibits THF-independent aldolase activity toward beta-hydroxyamino acids, producing glycine and aldehydes, via a retro-aldol mechanism. In Tropheryma whipplei (strain TW08/27) (Whipple's bacillus), this protein is Serine hydroxymethyltransferase.